Here is a 286-residue protein sequence, read N- to C-terminus: 4-hydroxy-3-methylbut-2-enyl diphosphate reductase (286 aa).

Cys12 provides a ligand contact to [4Fe-4S] cluster. (2E)-4-hydroxy-3-methylbut-2-enyl diphosphate contacts are provided by His47 and His80. His47 and His80 together coordinate dimethylallyl diphosphate. Positions 47 and 80 each coordinate isopentenyl diphosphate. Cys102 is a [4Fe-4S] cluster binding site. (2E)-4-hydroxy-3-methylbut-2-enyl diphosphate is bound at residue His130. His130 provides a ligand contact to dimethylallyl diphosphate. His130 lines the isopentenyl diphosphate pocket. Glu132 acts as the Proton donor in catalysis. Thr170 is a (2E)-4-hydroxy-3-methylbut-2-enyl diphosphate binding site. Residue Cys198 participates in [4Fe-4S] cluster binding. Residues Ser226, Asn228, and Ser270 each coordinate (2E)-4-hydroxy-3-methylbut-2-enyl diphosphate. Residues Ser226, Asn228, and Ser270 each contribute to the dimethylallyl diphosphate site. Ser226, Asn228, and Ser270 together coordinate isopentenyl diphosphate.

The protein belongs to the IspH family. It depends on [4Fe-4S] cluster as a cofactor.

The catalysed reaction is isopentenyl diphosphate + 2 oxidized [2Fe-2S]-[ferredoxin] + H2O = (2E)-4-hydroxy-3-methylbut-2-enyl diphosphate + 2 reduced [2Fe-2S]-[ferredoxin] + 2 H(+). The enzyme catalyses dimethylallyl diphosphate + 2 oxidized [2Fe-2S]-[ferredoxin] + H2O = (2E)-4-hydroxy-3-methylbut-2-enyl diphosphate + 2 reduced [2Fe-2S]-[ferredoxin] + 2 H(+). Its pathway is isoprenoid biosynthesis; dimethylallyl diphosphate biosynthesis; dimethylallyl diphosphate from (2E)-4-hydroxy-3-methylbutenyl diphosphate: step 1/1. It participates in isoprenoid biosynthesis; isopentenyl diphosphate biosynthesis via DXP pathway; isopentenyl diphosphate from 1-deoxy-D-xylulose 5-phosphate: step 6/6. Its function is as follows. Catalyzes the conversion of 1-hydroxy-2-methyl-2-(E)-butenyl 4-diphosphate (HMBPP) into a mixture of isopentenyl diphosphate (IPP) and dimethylallyl diphosphate (DMAPP). Acts in the terminal step of the DOXP/MEP pathway for isoprenoid precursor biosynthesis. This is 4-hydroxy-3-methylbut-2-enyl diphosphate reductase from Desulfovibrio desulfuricans (strain ATCC 27774 / DSM 6949 / MB).